Here is a 735-residue protein sequence, read N- to C-terminus: Probable E3 ubiquitin-protein ligase MID2 (735 aa).

An RING-type zinc finger spans residues 30–80; that stretch reads CPICLELFEDPLLLPCAHSLCFSCAHRILVSSCSSGESIEPITAFQCPTCR. Residues 137–184 form a B box-type 1; degenerate zinc finger; the sequence is IACQFCEQDPPRDAVKTCITCEVSYCDRCLRATHPNKKPFTSHRLVEP. The B box-type 2 zinc-finger motif lies at 190-232; the sequence is LRGITCLDHENEKVNMYCVSDDQLICALCKLVGRHRDHQVASL. Positions 195, 198, 218, and 224 each coordinate Zn(2+). Residues 233–301 adopt a coiled-coil conformation; it reads NDRFEKLKQT…IIQQRKQMIA (69 aa). One can recognise a COS domain in the interval 340–399; sequence LKENDQARFLQSAKNIAERVAMATASSQVLIPDINFNDAFENFALDFSREKKLLEGLDYL. The 134-residue stretch at 398-531 folds into the Fibronectin type-III domain; sequence YLTAPNPPSI…RNSEPTRLKT (134 aa). The B30.2/SPRY domain occupies 516 to 709; that stretch reads INQAGSRNSE…ILSGLPAPDF (194 aa).

The protein belongs to the TRIM/RBCC family. As to quaternary structure, homodimer or heterodimer with MID1. Interacts with IGBP1. In terms of processing, phosphorylated on serine and threonine residues. In terms of tissue distribution, low level in fetal kidney and lung, and in adult prostate, ovary and small intestine.

It localises to the cytoplasm. It is found in the cytoskeleton. The catalysed reaction is S-ubiquitinyl-[E2 ubiquitin-conjugating enzyme]-L-cysteine + [acceptor protein]-L-lysine = [E2 ubiquitin-conjugating enzyme]-L-cysteine + N(6)-ubiquitinyl-[acceptor protein]-L-lysine.. It functions in the pathway protein modification; protein ubiquitination. Its function is as follows. E3 ubiquitin ligase that plays a role in microtubule stabilization. Mediates the 'Lys-48'-linked polyubiquitination of LRRK2 to drive its localization to microtubules and its proteasomal degradation in neurons. This ubiquitination inhibits LRRK2 kinase activation by RAB29. The sequence is that of Probable E3 ubiquitin-protein ligase MID2 (MID2) from Homo sapiens (Human).